The following is a 512-amino-acid chain: tRNA-2-methylthio-N(6)-dimethylallyladenosine synthase (512 aa).

Residues 23–139 enclose the MTTase N-terminal domain; it reads RTYQVRTYGC…LPTLLERARH (117 aa). 6 residues coordinate [4Fe-4S] cluster: Cys32, Cys68, Cys102, Cys176, Cys180, and Cys183. The Radical SAM core domain maps to 162–398; the sequence is RESAYAAWVS…IELQERISLE (237 aa). The region spanning 401–469 is the TRAM domain; sequence REQVGRAVEL…PHHLIADAPI (69 aa). The interval 477-512 is disordered; the sequence is AGDAHAAGQKPRTGVGLGMPRIGAPAPSATAEGCGC.

This sequence belongs to the methylthiotransferase family. MiaB subfamily. As to quaternary structure, monomer. [4Fe-4S] cluster is required as a cofactor.

The protein localises to the cytoplasm. It catalyses the reaction N(6)-dimethylallyladenosine(37) in tRNA + (sulfur carrier)-SH + AH2 + 2 S-adenosyl-L-methionine = 2-methylsulfanyl-N(6)-dimethylallyladenosine(37) in tRNA + (sulfur carrier)-H + 5'-deoxyadenosine + L-methionine + A + S-adenosyl-L-homocysteine + 2 H(+). Catalyzes the methylthiolation of N6-(dimethylallyl)adenosine (i(6)A), leading to the formation of 2-methylthio-N6-(dimethylallyl)adenosine (ms(2)i(6)A) at position 37 in tRNAs that read codons beginning with uridine. This Mycolicibacterium smegmatis (strain ATCC 700084 / mc(2)155) (Mycobacterium smegmatis) protein is tRNA-2-methylthio-N(6)-dimethylallyladenosine synthase.